The primary structure comprises 115 residues: Hydrogenase maturation factor HypA (115 aa).

Position 2 (His-2) interacts with Ni(2+). Cys-73, Cys-76, Cys-89, and Cys-92 together coordinate Zn(2+).

This sequence belongs to the HypA/HybF family.

Functionally, involved in the maturation of [NiFe] hydrogenases. Required for nickel insertion into the metal center of the hydrogenase. This Polaromonas naphthalenivorans (strain CJ2) protein is Hydrogenase maturation factor HypA.